The sequence spans 119 residues: Holo-[acyl-carrier-protein] synthase (119 aa).

Positions 8 and 58 each coordinate Mg(2+).

It belongs to the P-Pant transferase superfamily. AcpS family. Mg(2+) serves as cofactor.

The protein resides in the cytoplasm. It carries out the reaction apo-[ACP] + CoA = holo-[ACP] + adenosine 3',5'-bisphosphate + H(+). In terms of biological role, transfers the 4'-phosphopantetheine moiety from coenzyme A to a Ser of acyl-carrier-protein. In Halalkalibacterium halodurans (strain ATCC BAA-125 / DSM 18197 / FERM 7344 / JCM 9153 / C-125) (Bacillus halodurans), this protein is Holo-[acyl-carrier-protein] synthase.